The primary structure comprises 216 residues: Cell envelope integrity protein Cei (216 aa).

The helical transmembrane segment at Pro25 to Leu45 threads the bilayer.

It is found in the cell membrane. Its function is as follows. Contributes to cell envelope integrity and virulence. This is Cell envelope integrity protein Cei from Mycobacterium tuberculosis (strain ATCC 25618 / H37Rv).